The chain runs to 320 residues: D-alanine--D-alanine ligase (320 aa).

Positions 104–308 (KRVCLSHGVP…YEDLCVEILR (205 aa)) constitute an ATP-grasp domain. 134–189 (AAEFGMPLMLKAPHEGSTIGIAKVETAEGMQAGFDLCAKYDDVVLVEQFVKGRELT) contributes to the ATP binding site. D261, E275, and N277 together coordinate Mg(2+).

It belongs to the D-alanine--D-alanine ligase family. Mg(2+) is required as a cofactor. The cofactor is Mn(2+).

It localises to the cytoplasm. It carries out the reaction 2 D-alanine + ATP = D-alanyl-D-alanine + ADP + phosphate + H(+). It participates in cell wall biogenesis; peptidoglycan biosynthesis. Functionally, cell wall formation. The chain is D-alanine--D-alanine ligase from Janthinobacterium sp. (strain Marseille) (Minibacterium massiliensis).